A 112-amino-acid chain; its full sequence is UPF0375 protein R05A10.4 (112 aa).

The N-terminal stretch at 1–19 is a signal peptide; it reads MNLSIFSAIIFSITIASSA. The N-linked (GlcNAc...) asparagine glycan is linked to N59.

Belongs to the UPF0375 family.

The protein resides in the secreted. The sequence is that of UPF0375 protein R05A10.4 from Caenorhabditis elegans.